The primary structure comprises 20 residues: uncharacterized protein (20 aa).

This is an uncharacterized protein from Escherichia coli (strain K12).